A 116-amino-acid polypeptide reads, in one-letter code: Co-chaperonin GroES (116 aa).

The protein belongs to the GroES chaperonin family. As to quaternary structure, heptamer of 7 subunits arranged in a ring. Interacts with the chaperonin GroEL.

Its subcellular location is the cytoplasm. In terms of biological role, together with the chaperonin GroEL, plays an essential role in assisting protein folding. The GroEL-GroES system forms a nano-cage that allows encapsulation of the non-native substrate proteins and provides a physical environment optimized to promote and accelerate protein folding. GroES binds to the apical surface of the GroEL ring, thereby capping the opening of the GroEL channel. The polypeptide is Co-chaperonin GroES (Mycoplasma pneumoniae (strain ATCC 29342 / M129 / Subtype 1) (Mycoplasmoides pneumoniae)).